Consider the following 510-residue polypeptide: Light-independent protochlorophyllide reductase subunit B (510 aa).

Aspartate 36 is a binding site for [4Fe-4S] cluster. The active-site Proton donor is aspartate 296. Glycine 431–methionine 432 provides a ligand contact to substrate.

This sequence belongs to the ChlB/BchB/BchZ family. In terms of assembly, protochlorophyllide reductase is composed of three subunits; ChlL, ChlN and ChlB. Forms a heterotetramer of two ChlB and two ChlN subunits. It depends on [4Fe-4S] cluster as a cofactor.

The protein resides in the plastid. The protein localises to the chloroplast. The enzyme catalyses chlorophyllide a + oxidized 2[4Fe-4S]-[ferredoxin] + 2 ADP + 2 phosphate = protochlorophyllide a + reduced 2[4Fe-4S]-[ferredoxin] + 2 ATP + 2 H2O. It participates in porphyrin-containing compound metabolism; chlorophyll biosynthesis (light-independent). Component of the dark-operative protochlorophyllide reductase (DPOR) that uses Mg-ATP and reduced ferredoxin to reduce ring D of protochlorophyllide (Pchlide) to form chlorophyllide a (Chlide). This reaction is light-independent. The NB-protein (ChlN-ChlB) is the catalytic component of the complex. This chain is Light-independent protochlorophyllide reductase subunit B, found in Auxenochlorella protothecoides (Green microalga).